Here is a 211-residue protein sequence, read N- to C-terminus: Thymidylate kinase (211 aa).

7 to 14 contributes to the ATP binding site; that stretch reads GCEGSGKS.

It belongs to the thymidylate kinase family.

It catalyses the reaction dTMP + ATP = dTDP + ADP. Phosphorylation of dTMP to form dTDP in both de novo and salvage pathways of dTTP synthesis. The polypeptide is Thymidylate kinase (Chlamydia abortus (strain DSM 27085 / S26/3) (Chlamydophila abortus)).